Here is a 76-residue protein sequence, read N- to C-terminus: Peptide ARACIN 1 (76 aa).

The signal sequence occupies residues 1 to 22 (MAMKTSHVLLLCLMFVIGFVEA). Residues 23 to 35 (RRSDTGPDISTPP) constitute a propeptide, removed in mature form. The short motif at 36 to 38 (SGS) is the SxS motif essential for MIK2 binding element. Residues 36–49 (SGSCGASIAEFNSS) carry the SCOOP motif motif. Residues 56–76 (APPCRRPRLQNSEDVTHTTLP) form a disordered region. The span at 64–76 (LQNSEDVTHTTLP) shows a compositional bias: polar residues.

The protein belongs to the serine rich endogenous peptide (SCOOP) phytocytokine family. As to quaternary structure, interacts with MIK2 (via extracellular leucine-rich repeat domain); this interaction triggers the formation of complex between MIK2 and the BAK1/SERK3 and SERK4 coreceptors, and subsequent BAK1 activation by phosphorylation. In terms of tissue distribution, mainly expressed in young developing leaves, hydathodes, immature flowers and elongating pollen tubes.

The protein localises to the cell membrane. It localises to the secreted. It is found in the extracellular space. Its subcellular location is the apoplast. The protein resides in the endoplasmic reticulum. Brassicaceae-specific phytocytokine (plant endogenous peptide released into the apoplast) perceived by MIK2 in a BAK1/SERK3 and SERK4 coreceptors-dependent manner, that modulates various physiological and antimicrobial processes including growth prevention and reactive oxygen species (ROS) response regulation. Inhibits the fungal growth of Alternaria brassicicola, Sclerotinia sclerotiorum, Fusarium graminearum, yeast (Saccharomyces) and Botrytis cinerea, thus being an antimicrobial peptide (AMP). Promotes resistance to A.brassicicola and B.cinerea. In Arabidopsis thaliana (Mouse-ear cress), this protein is Peptide ARACIN 1.